A 915-amino-acid chain; its full sequence is Isoleucine--tRNA ligase (915 aa).

The short motif at 57 to 67 (PYANGNLHMGH) is the 'HIGH' region element. Position 554 (glutamate 554) interacts with L-isoleucyl-5'-AMP. The 'KMSKS' region signature appears at 595-599 (KMSKS). Lysine 598 contacts ATP. Residues cysteine 885, cysteine 888, cysteine 905, and cysteine 908 each contribute to the Zn(2+) site.

This sequence belongs to the class-I aminoacyl-tRNA synthetase family. IleS type 1 subfamily. As to quaternary structure, monomer. Requires Zn(2+) as cofactor.

The protein resides in the cytoplasm. The enzyme catalyses tRNA(Ile) + L-isoleucine + ATP = L-isoleucyl-tRNA(Ile) + AMP + diphosphate. Its function is as follows. Catalyzes the attachment of isoleucine to tRNA(Ile). As IleRS can inadvertently accommodate and process structurally similar amino acids such as valine, to avoid such errors it has two additional distinct tRNA(Ile)-dependent editing activities. One activity is designated as 'pretransfer' editing and involves the hydrolysis of activated Val-AMP. The other activity is designated 'posttransfer' editing and involves deacylation of mischarged Val-tRNA(Ile). The protein is Isoleucine--tRNA ligase of Staphylococcus carnosus (strain TM300).